The following is a 152-amino-acid chain: Aspartate carbamoyltransferase regulatory chain (152 aa).

C108, C113, C136, and C139 together coordinate Zn(2+).

It belongs to the PyrI family. As to quaternary structure, contains catalytic and regulatory chains. The cofactor is Zn(2+).

Its function is as follows. Involved in allosteric regulation of aspartate carbamoyltransferase. The protein is Aspartate carbamoyltransferase regulatory chain of Pyrococcus furiosus (strain ATCC 43587 / DSM 3638 / JCM 8422 / Vc1).